The chain runs to 761 residues: uncharacterized protein (761 aa).

A CR-type zinc finger spans residues 1–84; that stretch reads MIVKCPICDG…CGGSGKVVKC (84 aa). One can recognise an S1 motif domain in the interval 135–200; it reads GKFYKGVVTR…EKREIDFKYI (66 aa).

This is an uncharacterized protein from Methanocaldococcus jannaschii (strain ATCC 43067 / DSM 2661 / JAL-1 / JCM 10045 / NBRC 100440) (Methanococcus jannaschii).